The primary structure comprises 511 residues: Lysine--tRNA ligase (511 aa).

2 residues coordinate Mg(2+): glutamate 421 and glutamate 428.

This sequence belongs to the class-II aminoacyl-tRNA synthetase family. Homodimer. It depends on Mg(2+) as a cofactor.

It is found in the cytoplasm. It carries out the reaction tRNA(Lys) + L-lysine + ATP = L-lysyl-tRNA(Lys) + AMP + diphosphate. This chain is Lysine--tRNA ligase, found in Aeromonas hydrophila subsp. hydrophila (strain ATCC 7966 / DSM 30187 / BCRC 13018 / CCUG 14551 / JCM 1027 / KCTC 2358 / NCIMB 9240 / NCTC 8049).